The primary structure comprises 689 residues: Protein-glutamine gamma-glutamyltransferase 2 (689 aa).

Active-site residues include cysteine 278, histidine 336, and aspartate 359. Residues asparagine 399, aspartate 401, glutamate 437, glutamate 447, and glutamate 452 each contribute to the Ca(2+) site. A disordered region spans residues 427 to 453 (STKSVGRDSREDITHTYKYPEGSEKER). Basic and acidic residues predominate over residues 431-441 (VGRDSREDITH). Position 476 to 483 (476 to 483 (RIKLSEGA)) interacts with GTP. Glutamate 539 provides a ligand contact to Ca(2+). Position 580–583 (580–583 (RDVY)) interacts with GTP.

It belongs to the transglutaminase superfamily. Transglutaminase family. In terms of assembly, monomer. The cofactor is Ca(2+). In terms of tissue distribution, predominates in mature erythrocytes. Also found in kidney and cardiac muscle.

Its subcellular location is the cytoplasm. The protein resides in the cytosol. It localises to the nucleus. It is found in the chromosome. The protein localises to the secreted. Its subcellular location is the extracellular space. The protein resides in the extracellular matrix. It localises to the cell membrane. It is found in the mitochondrion. The catalysed reaction is L-glutaminyl-[protein] + L-lysyl-[protein] = [protein]-L-lysyl-N(6)-5-L-glutamyl-[protein] + NH4(+). The enzyme catalyses L-glutaminyl-[protein] + serotonin = 5-serotonyl-L-glutamyl-[protein] + NH4(+). It carries out the reaction L-glutaminyl-[protein] + dopamine = 5-dopaminyl-L-glutamyl-[protein] + NH4(+). It catalyses the reaction L-glutaminyl-[protein] + histamine = 5-histaminyl-L-glutamyl-[protein] + NH4(+). The catalysed reaction is L-glutaminyl-[protein] + (R)-noradrenaline = 5-(R)-noradrenalinyl-L-glutamyl-[protein] + NH4(+). The enzyme catalyses L-glutaminyl-[protein] + H2O = L-glutamyl-[protein] + NH4(+). Its activity is regulated as follows. Acyltransferase activity is regulated by the binding of GTP and Ca(2+): inactivated by GTP, which stabilizes its closed structure, thereby obstructing the accessibility of substrates to the active sites. In contrast, Ca(2+) acts as a cofactor by inducing conformational change to the active open form. In absence of Ca(2+), Mg(2+) may bind Ca(2+)-binding sites, promoting GTP-binding and subsequent inhibition of the acyltransferase activity. In terms of biological role, calcium-dependent acyltransferase that catalyzes the formation of covalent bonds between peptide-bound glutamine and various primary amines, such as gamma-amino group of peptide-bound lysine, or mono- and polyamines, thereby producing cross-linked or aminated proteins, respectively. Involved in many biological processes, such as bone development, angiogenesis, wound healing, cellular differentiation, chromatin modification and apoptosis. Acts as a protein-glutamine gamma-glutamyltransferase by mediating the cross-linking of proteins: under physiological conditions, the protein cross-linking activity is inhibited by GTP; inhibition is relieved by Ca(2+) in response to various stresses. When secreted, catalyzes cross-linking of proteins of the extracellular matrix, resulting in the formation of scaffolds. Plays a key role during apoptosis, both by (1) promoting the cross-linking of cytoskeletal proteins resulting in condensation of the cytoplasm, and by (2) mediating cross-linking proteins of the extracellular matrix, resulting in the irreversible formation of scaffolds that stabilize the integrity of the dying cells before their clearance by phagocytosis, thereby preventing the leakage of harmful intracellular components. In addition to protein cross-linking, can use different monoamine substrates to catalyze a vast array of protein post-translational modifications: mediates aminylation of serotonin, dopamine, noradrenaline or histamine into glutamine residues of target proteins to generate protein serotonylation, dopaminylation, noradrenalinylation or histaminylation, respectively. Mediates protein serotonylation of small GTPases during activation and aggregation of platelets, leading to constitutive activation of these GTPases. Plays a key role in chromatin organization by mediating serotonylation and dopaminylation of histone H3. Catalyzes serotonylation of 'Gln-5' of histone H3 (H3Q5ser) during serotonergic neuron differentiation, thereby facilitating transcription. Acts as a mediator of neurotransmission-independent role of nuclear dopamine in ventral tegmental area (VTA) neurons: catalyzes dopaminylation of 'Gln-5' of histone H3 (H3Q5dop), thereby regulating relapse-related transcriptional plasticity in the reward system. Also acts as a protein deamidase by mediating the side chain deamidation of specific glutamine residues of proteins to glutamate. May also act as an isopeptidase cleaving the previously formed cross-links. Also able to participate in signaling pathways independently of its acyltransferase activity: acts as a signal transducer in alpha-1 adrenergic receptor-mediated stimulation of phospholipase C-delta (PLCD) activity and is required for coupling alpha-1 adrenergic agonists to the stimulation of phosphoinositide lipid metabolism. The polypeptide is Protein-glutamine gamma-glutamyltransferase 2 (Gallus gallus (Chicken)).